The primary structure comprises 250 residues: Endomucin (250 aa).

The signal sequence occupies residues methionine 1–glycine 20. Composition is skewed to low complexity over residues lysine 24–threonine 38 and threonine 45–serine 60. Disordered stretches follow at residues lysine 24–threonine 83 and asparagine 105–alanine 153. 3 N-linked (GlcNAc...) asparagine glycosylation sites follow: asparagine 46, asparagine 115, and asparagine 119. 2 stretches are compositionally biased toward polar residues: residues asparagine 105 to proline 135 and threonine 143 to alanine 153. The chain crosses the membrane as a helical span at residues valine 180 to glycine 200. Positions proline 210–asparagine 250 are disordered. A Phosphoserine modification is found at serine 226.

In terms of processing, highly O-glycosylated. Sialic acid-rich glycoprotein.

Its subcellular location is the membrane. Endothelial sialomucin, also called endomucin or mucin-like sialoglycoprotein, which interferes with the assembly of focal adhesion complexes and inhibits interaction between cells and the extracellular matrix. This Rattus norvegicus (Rat) protein is Endomucin (Emcn).